Consider the following 144-residue polypeptide: Cell division protein SepF (144 aa).

The interval 16–42 (DEMNEAPYTEAEQQEEEVPQAQKNERR) is disordered.

It belongs to the SepF family. Homodimer. Interacts with FtsZ.

Its subcellular location is the cytoplasm. Functionally, cell division protein that is part of the divisome complex and is recruited early to the Z-ring. Probably stimulates Z-ring formation, perhaps through the cross-linking of FtsZ protofilaments. Its function overlaps with FtsA. The sequence is that of Cell division protein SepF from Lactobacillus gasseri (strain ATCC 33323 / DSM 20243 / BCRC 14619 / CIP 102991 / JCM 1131 / KCTC 3163 / NCIMB 11718 / NCTC 13722 / AM63).